The following is a 4555-amino-acid chain: Protocadherin Fat 3 (4555 aa).

Positions 1–31 (MGVTMRHCIDTRPPSCLIFLLLKLCATVSQG) are cleaved as a signal peptide. Residues 32–4153 (LPGTGPLGFH…AGHSYVGKEE (4122 aa)) are Extracellular-facing. 33 consecutive Cadherin domains span residues 43-157 (THAL…RPLF), 158-265 (SPTT…APII), 263-374 (PIIH…TPIK), 376-471 (EKDV…TPEF), 472-577 (QETL…SPLF), 578-680 (EKVA…SKSF), 726-830 (KSFP…SPVF), 831-935 (LQDS…SPAF), 936-1042 (IPSS…TPYF), 1043-1147 (PDFA…APLT), 1148-1253 (SEPI…KPQF), 1254-1358 (PEKV…SPIP), 1362-1459 (DEPF…GPEF), 1460-1565 (SQPH…SPYF), 1566-1768 (TNPL…PPVF), 1769-1882 (LFSQ…PPVF), 1883-1985 (TQAV…TQSF), 1982-2083 (TQSF…SPVF), 2084-2185 (VGLP…MPVF), 2186-2286 (DKPF…PPVF), 2287-2393 (DQPT…PPVF), 2394-2495 (NQLI…SPAF), 2496-2599 (SQST…APQF), 2600-2707 (MTLE…LPSF), 2708-2813 (TQSQ…KPVF), 2814-2923 (ETSS…APVF), 2924-3028 (AHEV…SPVC), 3029-3130 (DQVA…PPVF), 3131-3235 (SSNH…PPVF), 3236-3340 (ERRD…PPRF), 3341-3445 (SQDV…SPVF), 3446-3550 (TPAN…KPTA), and 3551-3652 (IPLE…TIRF). Asparagine 48 carries N-linked (GlcNAc...) asparagine glycosylation. N-linked (GlcNAc...) asparagine glycosylation occurs at asparagine 341. 7 N-linked (GlcNAc...) asparagine glycosylation sites follow: asparagine 481, asparagine 562, asparagine 667, asparagine 799, asparagine 879, asparagine 898, and asparagine 1006. N-linked (GlcNAc...) asparagine glycans are attached at residues asparagine 1367 and asparagine 1429. Asparagine 1751 carries N-linked (GlcNAc...) asparagine glycosylation. N-linked (GlcNAc...) asparagine glycosylation is found at asparagine 1944, asparagine 1993, and asparagine 1996. Residues asparagine 2208, asparagine 2292, asparagine 2331, and asparagine 2467 are each glycosylated (N-linked (GlcNAc...) asparagine). Asparagine 2734 carries an N-linked (GlcNAc...) asparagine glycan. Asparagine 3000 is a glycosylation site (N-linked (GlcNAc...) asparagine). Asparagine 3201 carries an N-linked (GlcNAc...) asparagine glycan. Residues asparagine 3449, asparagine 3618, and asparagine 3741 are each glycosylated (N-linked (GlcNAc...) asparagine). The region spanning 3794 to 3832 (SNDPCVEKPCPEDMQCVGYEASRRPFLCQCPPGKLGECS) is the EGF-like 1 domain. Disulfide bonds link cysteine 3798–cysteine 3809, cysteine 3803–cysteine 3821, and cysteine 3823–cysteine 3831. The Laminin G-like domain maps to 3834 to 4017 (HTSLSFAGNS…VGLTELKLGC (184 aa)). The N-linked (GlcNAc...) asparagine glycan is linked to asparagine 3926. 10 disulfides stabilise this stretch: cysteine 3984–cysteine 4017, cysteine 4024–cysteine 4035, cysteine 4029–cysteine 4045, cysteine 4047–cysteine 4056, cysteine 4063–cysteine 4074, cysteine 4068–cysteine 4083, cysteine 4085–cysteine 4094, cysteine 4101–cysteine 4112, cysteine 4106–cysteine 4121, and cysteine 4123–cysteine 4132. 2 consecutive EGF-like domains span residues 4020–4057 (YPDA…TNCE) and 4059–4095 (EITA…VTCE). One can recognise an EGF-like 4; calcium-binding domain in the interval 4097–4133 (DVDECEREECENGGSCVNLFGSFFCNCTPGYVGQYCG). A helical transmembrane segment spans residues 4154 to 4174 (LIGIAVVLFVIFTLIVLFIVF). Residues 4175–4555 (RKKVFRKNYS…FVETQHQTQV (381 aa)) lie on the Cytoplasmic side of the membrane. A compositionally biased stretch (polar residues) spans 4326–4343 (SNKGSNSEVQSLNSFQSD). 3 disordered regions span residues 4326 to 4347 (SNKG…SGDD), 4395 to 4424 (GGYD…LPED), and 4452 to 4472 (PRFH…TDLG). Arginine 4508 and arginine 4518 each carry omega-N-methylarginine.

In terms of tissue distribution, restricted to the nervous system. Abundantly expressed in the fetal brain.

The protein localises to the membrane. In terms of biological role, may play a role in the interactions between neurites derived from specific subsets of neurons during development. The polypeptide is Protocadherin Fat 3 (Fat3) (Rattus norvegicus (Rat)).